Consider the following 110-residue polypeptide: Insulin (110 aa).

The first 24 residues, 1–24 (MAPWTRLLPLLALLSLWIPAPTRA), serve as a signal peptide directing secretion. Intrachain disulfides connect Cys31/Cys96, Cys43/Cys109, and Cys95/Cys100. Residues 57 to 87 (EAEDLQGKDAELGEAPGAGGLQPSALEAPLQ) constitute a propeptide, c peptide. Residues 60–80 (DLQGKDAELGEAPGAGGLQPS) form a disordered region.

The protein belongs to the insulin family. In terms of assembly, heterodimer of a B chain and an A chain linked by two disulfide bonds.

Its subcellular location is the secreted. Its function is as follows. Insulin decreases blood glucose concentration. It increases cell permeability to monosaccharides, amino acids and fatty acids. It accelerates glycolysis, the pentose phosphate cycle, and glycogen synthesis in liver. This is Insulin (INS) from Felis catus (Cat).